A 196-amino-acid chain; its full sequence is Imidazole glycerol phosphate synthase subunit HisH (196 aa).

The 195-residue stretch at 2-196 folds into the Glutamine amidotransferase type-1 domain; the sequence is KIIIINTNCS…EQLIKNFLEI (195 aa). Cysteine 77 functions as the Nucleophile in the catalytic mechanism. Residues histidine 178 and glutamate 180 contribute to the active site.

As to quaternary structure, heterodimer of HisH and HisF.

It localises to the cytoplasm. It carries out the reaction 5-[(5-phospho-1-deoxy-D-ribulos-1-ylimino)methylamino]-1-(5-phospho-beta-D-ribosyl)imidazole-4-carboxamide + L-glutamine = D-erythro-1-(imidazol-4-yl)glycerol 3-phosphate + 5-amino-1-(5-phospho-beta-D-ribosyl)imidazole-4-carboxamide + L-glutamate + H(+). The enzyme catalyses L-glutamine + H2O = L-glutamate + NH4(+). The protein operates within amino-acid biosynthesis; L-histidine biosynthesis; L-histidine from 5-phospho-alpha-D-ribose 1-diphosphate: step 5/9. IGPS catalyzes the conversion of PRFAR and glutamine to IGP, AICAR and glutamate. The HisH subunit catalyzes the hydrolysis of glutamine to glutamate and ammonia as part of the synthesis of IGP and AICAR. The resulting ammonia molecule is channeled to the active site of HisF. The chain is Imidazole glycerol phosphate synthase subunit HisH from Blochmanniella floridana.